Consider the following 62-residue polypeptide: Phycobilisome degradation protein NblA homolog 1 (62 aa).

The protein to Synechococcus PCC 7942 NblA and some, to chloroplast ycf18.

The sequence is that of Phycobilisome degradation protein NblA homolog 1 from Synechocystis sp. (strain ATCC 27184 / PCC 6803 / Kazusa).